The following is a 316-amino-acid chain: Beta-ketoacyl-[acyl-carrier-protein] synthase III 1 (316 aa).

Active-site residues include Cys112 and His243. Positions 244–248 are ACP-binding; sequence QANYR. Residue Asn273 is part of the active site.

The protein belongs to the thiolase-like superfamily. FabH family. In terms of assembly, homodimer.

The protein localises to the cytoplasm. It carries out the reaction malonyl-[ACP] + acetyl-CoA + H(+) = 3-oxobutanoyl-[ACP] + CO2 + CoA. Its pathway is lipid metabolism; fatty acid biosynthesis. Functionally, catalyzes the condensation reaction of fatty acid synthesis by the addition to an acyl acceptor of two carbons from malonyl-ACP. Catalyzes the first condensation reaction which initiates fatty acid synthesis and may therefore play a role in governing the total rate of fatty acid production. Possesses both acetoacetyl-ACP synthase and acetyl transacylase activities. Its substrate specificity determines the biosynthesis of branched-chain and/or straight-chain of fatty acids. This chain is Beta-ketoacyl-[acyl-carrier-protein] synthase III 1, found in Vibrio vulnificus (strain YJ016).